The following is a 910-amino-acid chain: Importin subunit beta-2 (910 aa).

HEAT repeat units follow at residues 12-39 (VLVELSEVIKNSLSENSQTRNAALNLLE), 44-82 (IPDLNNYLTCILINATELSVSIRSAAGLLLKNNVRVSSL), 93-126 (YTKSTVIRGLCDPEQLIRGISGNVITTIISRWGI), 132-169 (VLPQLMEMLSSPASTTQEGAFSALTKICEDSAQELDRD), 177-207 (DFMIPRFIELARHENPKIRTDALFCLNQFVL), 220-247 (FLETCYALATDVSPNVRKNVCQALVYLL), 259-286 (GSIVEYMLYSTQDSDQNVALEACEFWLA), 302-406 (DKIV…LSSF), 414-442 (IILPHLKQSLTSEDWKVQEAGVLAVGAIA), 454-481 (PELYPYFLSLLDSKKPLVRTITCWTLGR), 499-532 (FVPLLQGLLRMVVDNNKKVQEAGCSAFAILEEQA), 540-573 (LEPILTNLAFAFQKYQRKNVLILYDAVQTLADYV), 581-619 (RYIELLITPLLQKWSMIPDDDPNLFPLFECLSSVAVALR), 627-677 (AETY…ALGS), 690-721 (LGQIIGICAKDEVPEVRQSAYALLGDMCMYCF), 729-764 (DALLVDMLPQMQLPLLHVSASNNAIWSAGEMALQLG), 772-807 (KPLLERLICILKSKKSNTTVLENVAITIGRLGVYNP), 815-848 (ELFYQPWFEIIKTVGENEEKDSAFRGFCNILACN), and 857-888 (PMFVLCVAEYENPSAELRDMFQKILQGSVELF). An Importin N-terminal domain is found at 34-122 (ALNLLEKAKD…SGNVITTIIS (89 aa)). Positions 333-381 (DREEDIRPQHAKGKSRITLNTQGPITQQGSSNADADELEDEDEDDDEFD) are disordered. A compositionally biased stretch (polar residues) spans 349–364 (ITLNTQGPITQQGSSN). Residues 366–381 (DADELEDEDEDDDEFD) show a composition bias toward acidic residues.

This sequence belongs to the importin beta family. Importin beta-2 subfamily. As to quaternary structure, interacts with Ran; interacts specifically with the GTP-bound form of Ran (GTP-Ran), protecting it from GTP hydrolysis and nucleotide exchange. Interacts with nucleoporins.

The protein localises to the cytoplasm. The protein resides in the nucleus envelope. Functionally, functions in nuclear protein import as nuclear transport receptor. Serves as receptor for arginine/glycine-rich nuclear localization signals (rg-NLS) and PY-NLS in cargo substrates. Its predominant cargo substrate seems to be mRNA-binding proteins. Mediates docking of the importin/substrate complex to the nuclear pore complex (NPC) through binding to repeat-containing nucleoporins. The complex is subsequently translocated through the pore by an energy requiring, Ran-dependent mechanism. At the nucleoplasmic side of the NPC, GTP-Ran binding leads to release of the cargo. The importin is re-exported from the nucleus to the cytoplasm where GTP hydrolysis releases Ran from importin. The directionality of nuclear import is thought to be conferred by an asymmetric distribution of the GTP- and GDP-bound forms of Ran between the cytoplasm and nucleus. In Schizosaccharomyces pombe (strain 972 / ATCC 24843) (Fission yeast), this protein is Importin subunit beta-2.